A 1200-amino-acid chain; its full sequence is ATP-dependent helicase/deoxyribonuclease subunit B (1200 aa).

The protein belongs to the helicase family. AddB/RexB type 2 subfamily. Heterodimer of AddA and RexB. It depends on Mg(2+) as a cofactor.

The heterodimer acts as both an ATP-dependent DNA helicase and an ATP-dependent, dual-direction single-stranded exonuclease. Recognizes the chi site generating a DNA molecule suitable for the initiation of homologous recombination. This subunit has 5' -&gt; 3' nuclease activity but not helicase activity. This is ATP-dependent helicase/deoxyribonuclease subunit B from Lactiplantibacillus plantarum (strain ATCC BAA-793 / NCIMB 8826 / WCFS1) (Lactobacillus plantarum).